We begin with the raw amino-acid sequence, 440 residues long: Argininosuccinate lyase (440 aa).

The protein belongs to the lyase 1 family. Argininosuccinate lyase subfamily.

The protein localises to the cytoplasm. It carries out the reaction 2-(N(omega)-L-arginino)succinate = fumarate + L-arginine. It functions in the pathway amino-acid biosynthesis; L-arginine biosynthesis; L-arginine from L-ornithine and carbamoyl phosphate: step 3/3. This chain is Argininosuccinate lyase, found in Clostridium botulinum (strain Kyoto / Type A2).